The following is a 39-amino-acid chain: Photosystem II reaction center protein J (39 aa).

The helical transmembrane segment at 7-27 (IPLWLVATIAGLGVIAVLGLF) threads the bilayer.

It belongs to the PsbJ family. In terms of assembly, PSII is composed of 1 copy each of membrane proteins PsbA, PsbB, PsbC, PsbD, PsbE, PsbF, PsbH, PsbI, PsbJ, PsbK, PsbL, PsbM, PsbT, PsbX, PsbY, PsbZ, Psb30/Ycf12, peripheral proteins PsbO, CyanoQ (PsbQ), PsbU, PsbV and a large number of cofactors. It forms dimeric complexes.

Its subcellular location is the cellular thylakoid membrane. In terms of biological role, one of the components of the core complex of photosystem II (PSII). PSII is a light-driven water:plastoquinone oxidoreductase that uses light energy to abstract electrons from H(2)O, generating O(2) and a proton gradient subsequently used for ATP formation. It consists of a core antenna complex that captures photons, and an electron transfer chain that converts photonic excitation into a charge separation. This chain is Photosystem II reaction center protein J, found in Microcystis aeruginosa (strain NIES-843 / IAM M-2473).